We begin with the raw amino-acid sequence, 272 residues long: NH(3)-dependent NAD(+) synthetase (272 aa).

Position 45 to 52 (Gly-45 to Ser-52) interacts with ATP. Asp-51 contacts Mg(2+). Arg-138 contacts deamido-NAD(+). Thr-158 is an ATP binding site. Position 163 (Glu-163) interacts with Mg(2+). Positions 171 and 178 each coordinate deamido-NAD(+). Positions 187 and 209 each coordinate ATP. Deamido-NAD(+) is bound at residue His-258–Lys-259.

Belongs to the NAD synthetase family. As to quaternary structure, homodimer.

It carries out the reaction deamido-NAD(+) + NH4(+) + ATP = AMP + diphosphate + NAD(+) + H(+). It functions in the pathway cofactor biosynthesis; NAD(+) biosynthesis; NAD(+) from deamido-NAD(+) (ammonia route): step 1/1. Its function is as follows. Catalyzes the ATP-dependent amidation of deamido-NAD to form NAD. Uses ammonia as a nitrogen source. The polypeptide is NH(3)-dependent NAD(+) synthetase (Bacillus mycoides (strain KBAB4) (Bacillus weihenstephanensis)).